The primary structure comprises 278 residues: Autophagy protein 5 (278 aa).

Positions 1 to 25 (MSSPPASTDHRLVGSTTGAPDTPSA) are disordered. Lysine 128 participates in a covalent cross-link: Glycyl lysine isopeptide (Lys-Gly) (interchain with G-Cter in ATG12).

It belongs to the ATG5 family. As to quaternary structure, conjugated with ATG12. Conjugated to ATG12; which is essential for autophagy.

Its subcellular location is the preautophagosomal structure membrane. Functionally, involved in cytoplasm to vacuole transport (Cvt) and autophagic vesicle formation. Autophagy is essential for maintenance of amino acid levels and protein synthesis under nitrogen starvation. Required for selective autophagic degradation of the nucleus (nucleophagy). Also required for mitophagy, which eliminates defective or superfluous mitochondria in order to fulfill cellular energy requirements and prevent excess ROS production. Conjugation with ATG12, through a ubiquitin-like conjugating system involving ATG7 as an E1-like activating enzyme and ATG10 as an E2-like conjugating enzyme, is essential for its function. The ATG12-ATG5 conjugate acts as an E3-like enzyme which is required for lipidation of ATG8 and ATG8 association to the vesicle membranes. This Chaetomium globosum (strain ATCC 6205 / CBS 148.51 / DSM 1962 / NBRC 6347 / NRRL 1970) (Soil fungus) protein is Autophagy protein 5 (ATG5).